A 748-amino-acid chain; its full sequence is EF-hand domain-containing family member C2 (748 aa).

3 DM10 domains span residues 75–182, 226–366, and 428–535; these read DKQV…VKMG, DRQV…RSKY, and VSNV…EQHA. EF-hand domains lie at 556-591 and 631-666; these read EQQKTVKQFFTMSDPSSTGSLPYESFRTLLADLDVE and EKFSEMIQAFTHEDRDRCGQLSSKEARIICKAFRLP.

It localises to the cytoplasm. The protein resides in the cytoskeleton. The protein localises to the cilium axoneme. Functionally, microtubule inner protein (MIP) part of the dynein-decorated doublet microtubules (DMTs) in cilia axoneme, which is required for motile cilia beating. The polypeptide is EF-hand domain-containing family member C2 (efhc2) (Danio rerio (Zebrafish)).